Reading from the N-terminus, the 330-residue chain is B-cell receptor CD22 (330 aa).

The N-terminal stretch at 1–17 (MHLLGPWLLLLEYLAFS) is a signal peptide. The 119-residue stretch at 18-136 (DSSKWAFEHP…MERIHLNVSE (119 aa)) folds into the Ig-like V-type domain. Topologically, residues 18–330 (DSSKWAFEHP…VFLQVQYAPE (313 aa)) are extracellular. 3 cysteine pairs are disulfide-bonded: cysteine 37-cysteine 165, cysteine 42-cysteine 100, and cysteine 159-cysteine 217. Asparagine 65, asparagine 99, and asparagine 110 each carry an N-linked (GlcNAc...) asparagine glycan. Arginine 118 serves as a coordination point for N-acetylneuraminate. Residues asparagine 133, asparagine 162, asparagine 187, and asparagine 229 are each glycosylated (N-linked (GlcNAc...) asparagine). 2 consecutive Ig-like C2-type domains span residues 141-233 (PHIQ…DTVQ) and 240-324 (PKLK…VFLQ). Residues cysteine 263 and cysteine 307 are joined by a disulfide bond.

This sequence belongs to the immunoglobulin superfamily. SIGLEC (sialic acid binding Ig-like lectin) family. In terms of assembly, predominantly monomer of isoform CD22-beta. Also found as heterodimer of isoform CD22-beta and a shorter isoform. Interacts with PTPN6/SHP-1, LYN, SYK, PIK3R1/PIK3R2 and PLCG1 upon phosphorylation. Interacts with GRB2, INPP5D and SHC1 upon phosphorylation. May form a complex with INPP5D/SHIP, GRB2 and SHC1.

Its subcellular location is the cell membrane. In terms of biological role, most highly expressed siglec (sialic acid-binding immunoglobulin-like lectin) on B-cells that plays a role in various aspects of B-cell biology including differentiation, antigen presentation, and trafficking to bone marrow. Binds to alpha 2,6-linked sialic acid residues of surface molecules such as CD22 itself, CD45 and IgM in a cis configuration. Can also bind to ligands on other cells as an adhesion molecule in a trans configuration. Acts as an inhibitory coreceptor on the surface of B-cells and inhibits B-cell receptor induced signaling, characterized by inhibition of the calcium mobilization and cellular activation. Mechanistically, the immunoreceptor tyrosine-based inhibitory motif domain is phosphorylated by the Src kinase LYN, which in turn leads to the recruitment of the protein tyrosine phosphatase 1/PTPN6, leading to the negative regulation of BCR signaling. If this negative signaling from is of sufficient strength, apoptosis of the B-cell can be induced. This chain is B-cell receptor CD22, found in Pongo pygmaeus (Bornean orangutan).